The primary structure comprises 598 residues: UvrABC system protein C (598 aa).

Residues 14 to 91 (DSPGCYLHKD…IQKNMPKYNI (78 aa)) enclose the GIY-YIG domain. The UVR domain maps to 196–231 (DKIIEDLRSKMLAASEEMAFERAAEYRDLISGIATM).

This sequence belongs to the UvrC family. Interacts with UvrB in an incision complex.

It localises to the cytoplasm. The UvrABC repair system catalyzes the recognition and processing of DNA lesions. UvrC both incises the 5' and 3' sides of the lesion. The N-terminal half is responsible for the 3' incision and the C-terminal half is responsible for the 5' incision. This Streptococcus pyogenes serotype M5 (strain Manfredo) protein is UvrABC system protein C.